Here is a 201-residue protein sequence, read N- to C-terminus: Ran-specific GTPase-activating protein 1 (201 aa).

2 stretches are compositionally biased toward basic and acidic residues: residues 1 to 17 and 32 to 66; these read MSSE…EEAA and KKAE…IHFE. Residues 1-66 are disordered; that stretch reads MSSEDKKPVV…APESPDIHFE (66 aa). Ser-60 carries the post-translational modification Phosphoserine. Positions 64–200 constitute a RanBD1 domain; it reads HFEPVVHLEK…FEKAQEINKK (137 aa).

This sequence belongs to the RANBP1 family. Interacts with GSP1 and PRP20.

It localises to the cytoplasm. The protein resides in the nucleus. Functionally, important for the export of protein containing nuclear export signal (NES) out of the nucleus. Stimulates the GTPase activity of GSP1 and GSP2. In Saccharomyces cerevisiae (strain ATCC 204508 / S288c) (Baker's yeast), this protein is Ran-specific GTPase-activating protein 1 (YRB1).